Reading from the N-terminus, the 72-residue chain is Small ribosomal subunit protein bS18c (72 aa).

It belongs to the bacterial ribosomal protein bS18 family. Part of the 30S ribosomal subunit.

Its subcellular location is the plastid. It localises to the chloroplast. In Phaeodactylum tricornutum (strain CCAP 1055/1), this protein is Small ribosomal subunit protein bS18c.